The sequence spans 178 residues: CRISPR system ring nuclease SSO2081 (178 aa).

The interval 105 to 106 (RK) is transition state stabilizer.

This sequence belongs to the cOA ring nuclease family. In terms of assembly, homodimer. The cofactor is Does not require a metal cofactor..

It is found in the cytoplasm. The enzyme catalyses cyclic tetraadenylate = 2 5'-hydroxy-diadenylate 2',3'-cylic phosphate. In terms of biological role, CRISPR (clustered regularly interspaced short palindromic repeat) is an adaptive immune system that provides protection against mobile genetic elements (viruses, transposable elements and conjugative plasmids). CRISPR clusters contain spacers, sequences complementary to antecedent mobile elements, and target invading nucleic acids. CRISPR clusters are transcribed and processed into CRISPR RNA (crRNA). A nuclease that degrades cyclic oligoadenylates (cOA), second messengers that induce an antiviral state important for defense against invading nucleic acids. Destruction of cOA deactivates the Csx1 ribonuclease, preventing uncontrolled degradation of cellular RNA. Degrades cA4 (a tetraadenylate ring) into a linear diadenylate product with 5'-OH and 2',3'-cyclic phosphate termini. Is 10-fold more active than SSO1393, suggesting this is the major cA4 degradation enzyme. Is highly specific for cA4; it has very poor activity on cA6 and no discernible activity against a number of cyclic dinucleotides. There may be 2 active sites per homodimer. The sequence is that of CRISPR system ring nuclease SSO2081 from Saccharolobus solfataricus (strain ATCC 35092 / DSM 1617 / JCM 11322 / P2) (Sulfolobus solfataricus).